A 465-amino-acid chain; its full sequence is Protein maelstrom (465 aa).

Positions 2 to 69 (APKKHSGFMM…ADRGKRERLN (68 aa)) form a DNA-binding region, HMG box. The disordered stretch occupies residues 415–440 (MRKSSKHTGPSVSTQRERNAGAWNLP).

This sequence belongs to the maelstrom family.

It is found in the cytoplasm. It localises to the nucleus. Involved both in the piRNA and miRNA metabolic processes. As a component of the meiotic nuage, plays a central role during oogenesis by repressing transposable elements and preventing their mobilization, which is essential for the germline integrity. Repression of transposable elements is mediated via the piRNA metabolic process, which mediates the repression of transposable elements during meiosis by forming complexes composed of piRNAs and Piwi proteins and governs the repression of transposons. As a nuclear component, it is required for proper differentiation in the germline stem cell (GSC) lineage by repressing microRNA-7 (miR-7), thereby acting as an indirect regulator of bag-of-marbles (Bam). Acts by binding to the promoter of miR-7 gene and repressing its expression; miR-7 repression alleviates the Bam repression by miR-7, thereby allowing differentiation in the germline stem cell (GSC) lineage. This Drosophila yakuba (Fruit fly) protein is Protein maelstrom (mael).